The chain runs to 424 residues: ATP synthase subunit beta, mitochondrial (424 aa).

The transit peptide at 1–60 (MFRLSSGLLKGGACASRSRIPQLGRSLYSTATSAGADKTQGKIHTVIGAVVDVQFNHGRL) directs the protein to the mitochondrion. Residues 187 to 194 (GGAGVGKT), 188 to 195 (GAGVGKTV), 219 to 220 (ER), and Y374 contribute to the ATP site.

The protein belongs to the ATPase alpha/beta chains family. F-type ATPases have 2 components, CF(1) - the catalytic core - and CF(0) - the membrane proton channel. CF(1) has five subunits: alpha(3), beta(3), gamma(1), delta(1), epsilon(1). CF(0) has three main subunits: a, b and c.

It localises to the mitochondrion. The protein resides in the mitochondrion inner membrane. It catalyses the reaction ATP + H2O + 4 H(+)(in) = ADP + phosphate + 5 H(+)(out). Its function is as follows. ATP synthase subunit beta; part of the gene cluster that mediates the biosynthesis of citreoviridin, an inhibitor of the of F1-ATPase beta-subunit. Mitochondrial membrane ATP synthase (F(1)F(0) ATP synthase or Complex V) produces ATP from ADP in the presence of a proton gradient across the membrane which is generated by electron transport complexes of the respiratory chain. Whereas ctvA to ctvD constitute the core biosynthetic gene cluster, ctvE acts as a self-resistance gene. This Aspergillus terreus (strain NIH 2624 / FGSC A1156) protein is ATP synthase subunit beta, mitochondrial.